Here is a 225-residue protein sequence, read N- to C-terminus: Germin-like protein 3-1 (225 aa).

Residues 1 to 22 form the signal peptide; it reads MRAAVAHRILLSLALFAVLCRC. Cys31 and Cys51 are joined by a disulfide. The Cupin type-1 domain maps to 65–216; sequence SALSRATNPA…AFKITGQDVQ (152 aa). An N-linked (GlcNAc...) asparagine glycan is attached at Asn81. Mn(2+) is bound by residues His115, His117, Glu122, and His161.

Belongs to the germin family. As to quaternary structure, oligomer (believed to be a pentamer but probably hexamer).

The protein localises to the secreted. Its subcellular location is the extracellular space. It localises to the apoplast. In terms of biological role, may play a role in plant defense. Probably has no oxalate oxidase activity even if the active site is conserved. In Oryza sativa subsp. japonica (Rice), this protein is Germin-like protein 3-1.